Reading from the N-terminus, the 401-residue chain is 1-deoxy-D-xylulose 5-phosphate reductoisomerase (401 aa).

The NADPH site is built by T10, G11, S12, I13, G36, N38, and N124. K125 is a binding site for 1-deoxy-D-xylulose 5-phosphate. Residue E126 participates in NADPH binding. Position 150 (D150) interacts with Mn(2+). The 1-deoxy-D-xylulose 5-phosphate site is built by S151, E152, S186, and H209. E152 provides a ligand contact to Mn(2+). G215 contacts NADPH. Residues S222, N227, K228, and E231 each coordinate 1-deoxy-D-xylulose 5-phosphate. E231 lines the Mn(2+) pocket.

The protein belongs to the DXR family. It depends on Mg(2+) as a cofactor. Mn(2+) serves as cofactor.

It catalyses the reaction 2-C-methyl-D-erythritol 4-phosphate + NADP(+) = 1-deoxy-D-xylulose 5-phosphate + NADPH + H(+). Its pathway is isoprenoid biosynthesis; isopentenyl diphosphate biosynthesis via DXP pathway; isopentenyl diphosphate from 1-deoxy-D-xylulose 5-phosphate: step 1/6. Catalyzes the NADPH-dependent rearrangement and reduction of 1-deoxy-D-xylulose-5-phosphate (DXP) to 2-C-methyl-D-erythritol 4-phosphate (MEP). The polypeptide is 1-deoxy-D-xylulose 5-phosphate reductoisomerase (Vibrio parahaemolyticus serotype O3:K6 (strain RIMD 2210633)).